A 173-amino-acid polypeptide reads, in one-letter code: Terpene cyclase subB (173 aa).

A run of 4 helical transmembrane segments spans residues 11-31 (PGYLEVAWIADTCKLLMGLGW), 51-71 (ALMPLCCNFAWELTYAVIYPF), 112-132 (LPFIFIICIAAWTTAHLALAL), and 141-161 (AFSAYGCQLLLSVGALCQLLS).

The protein belongs to the paxB family.

It is found in the membrane. It participates in secondary metabolite biosynthesis; terpenoid biosynthesis. In terms of biological role, terpene cyclase; part of the gene cluster that mediates the biosynthesis of the immunosuppressants subglutinols, meroterpenoids consisting of an alpha-pyrone (4-hydroxy-5,6-dimethyl-2-pyrone) moiety attached to a decalin core fused to a five-membered cyclic ether carrying a prenylside chain. The first step of the pathway is the synthesis of the alpha-pyrone moiety by the polyketide synthase subA via condensation of one acetyl-CoA starter unit with 3 malonyl-CoA units and 2 methylations. The alpha-pyrone is then combined with geranylgeranyl pyrophosphate (GGPP) formed by the GGPP synthase subD through the action of the prenyltransferase subC to yield a linear alpha-pyrone diterpenoid. Subsequent steps in the subglutinol biosynthetic pathway involve the decalin core formation, which is thought to be initiated by the epoxidation of the C10-C11 olefin by the FAD-dependent oxidoreductase subE. The following cyclization cascade would be catalyzed by the terpene cyclase subB. Lastly, the FAD-dependent dehydrogenase subF probably catalyzes the five-membered cyclic ether formation to complete the formation of subglutinol A. Subsequent redox reactions appear to give rise to subglutinol C and D, however, it remains unclear which enzymes are responsible for these transformations. SubD may have secondary function in the conversion of the identified subglutinols to subglutinol analog 45, which seems to be the major product of the cluster. This chain is Terpene cyclase subB, found in Metarhizium robertsii (strain ARSEF 23 / ATCC MYA-3075) (Metarhizium anisopliae (strain ARSEF 23)).